We begin with the raw amino-acid sequence, 303 residues long: Recombination-associated protein RdgC (303 aa).

It belongs to the RdgC family.

The protein localises to the cytoplasm. Its subcellular location is the nucleoid. Functionally, may be involved in recombination. This chain is Recombination-associated protein RdgC, found in Serratia proteamaculans (strain 568).